The chain runs to 457 residues: Fibrinogen C domain-containing protein 1-B (457 aa).

The interval 1–21 (MGSDRWKNIRGTPQMEDSVQE) is disordered. The Cytoplasmic portion of the chain corresponds to 1–33 (MGSDRWKNIRGTPQMEDSVQEKSQRKGCGYILC). Residues 34–54 (TVLLSVAVLLAVTVTGAVLFM) form a helical; Signal-anchor for type II membrane protein membrane-spanning segment. At 55-457 (NQYHAPSTEP…MKIRPQREEN (403 aa)) the chain is on the extracellular side. In terms of domain architecture, Fibrinogen C-terminal spans 231–454 (CANGSKPRDC…FTEMKIRPQR (224 aa)). N-linked (GlcNAc...) asparagine glycosylation is present at N233. C240 and C269 are joined by a disulfide. N336 is a glycosylation site (N-linked (GlcNAc...) asparagine). Ca(2+)-binding residues include D389 and D391. A disulfide bridge connects residues C397 and C410.

In terms of assembly, homotetramer; disulfide-linked.

The protein resides in the membrane. Acetyl group-binding receptor which shows a calcium-dependent binding to acetylated structures such as chitin, some N-acetylated carbohydrates, and amino acids. This Xenopus laevis (African clawed frog) protein is Fibrinogen C domain-containing protein 1-B (fibcd1-b).